The following is a 168-amino-acid chain: Phosphopantetheine adenylyltransferase (168 aa).

Threonine 14 is a binding site for substrate. ATP is bound by residues 14-15 (TF) and histidine 22. Substrate is bound by residues lysine 46, leucine 78, and arginine 92. ATP-binding positions include 93 to 95 (GLR), glutamate 103, and 128 to 134 (YSFISSS).

Belongs to the bacterial CoaD family. In terms of assembly, homohexamer. It depends on Mg(2+) as a cofactor.

It localises to the cytoplasm. The enzyme catalyses (R)-4'-phosphopantetheine + ATP + H(+) = 3'-dephospho-CoA + diphosphate. The protein operates within cofactor biosynthesis; coenzyme A biosynthesis; CoA from (R)-pantothenate: step 4/5. Its function is as follows. Reversibly transfers an adenylyl group from ATP to 4'-phosphopantetheine, yielding dephospho-CoA (dPCoA) and pyrophosphate. The sequence is that of Phosphopantetheine adenylyltransferase from Xanthomonas campestris pv. campestris (strain B100).